Here is a 194-residue protein sequence, read N- to C-terminus: uncharacterized protein (194 aa).

In terms of domain architecture, HTH tetR-type spans 2-62 (QGPRERMVVS…CEAVDYAGEH (61 aa)). Residues 25 to 44 (AISDVLQHSGAPRGSAYHYF) constitute a DNA-binding region (H-T-H motif).

This is an uncharacterized protein from Mycobacterium tuberculosis (strain CDC 1551 / Oshkosh).